Reading from the N-terminus, the 886-residue chain is MEGRSDFVATSQSGSEMSHSETRNRTGMNARKRKFACVECRQQKSKCDAHERAPEPCTKCAKKNVPCILKRDFRRTYKRARNEAIEKRFKELTRTLTNLTSDEILKKIEEEQEIVLDNSNFTKEKVKQLRKSAFETTEIEPRSYKTLRGEPISYSTNRRHTDSSPLTLLSSSTNFDPVHSTNVMTDDQLKCLPKSLGDVYLSSSDIAELFQEFATKYHQFLPVVDLSKGAERIYHLSPCLFWVILLIGLRRKFGATDLMTRLSVLVKSVLSEITISPIIRYTPSDKDEPVLNVASVYSVQAFLLYTFWPPLTSSLSADTSWNTIGTAMFQALRVGLNCAGFSKEYASANSELVNEQIRTWICCNVVSQTVASSFGFPAYVSFDYLVISSIRVPNSKSQVDIPNELRQMAQIARFENQIVNTMNSTPASVTGMVSQEEKQPLLHVLNQQLSQLEISLEENNLDDIRKFLLLVAKVHLLTYYFTDVTSQSAGKSNGNIYEGSYSIMELDTSFETKRGLVKVYNAAVNFLIHANSMWEHDPTIIKYFPGLFVLNIWQSACIISKLIHSSLHSMLDVNSGKKAYNNAISLTFNASVLKYDMAYRSSGIMRSIWSLFANMYDAWKNDQKEGGGRLNNDFNLGITIKSRMSVNVFFDCLYILKEKCGMAKLERETKVSTAYNVDEEEEEDEDEEGEEEEEEEELSSKVPENMDSQQLRTRKFTNVRHPEKKARKIIETIPLDPNPINAGSTSSGSSLTTPNSQVANTISYRGILNKMSPREQLNHANLDSSVSTDIKDTEAVNEPLPIGRNAEHPANQPPLSITQMQENTLPATQANSSLLETYPIVQSNPVTTTIKESPNSIMAGWDNWESDMVWRDVDILMNEFAFNPKV.

The segment at 1–28 is disordered; it reads MEGRSDFVATSQSGSEMSHSETRNRTGM. A compositionally biased stretch (polar residues) spans 8–17; sequence VATSQSGSEM. Positions 37 to 67 form a DNA-binding region, zn(2)-C6 fungal-type; that stretch reads CVECRQQKSKCDAHERAPEPCTKCAKKNVPC. Disordered stretches follow at residues 673–709 and 734–756; these read TAYN…MDSQ and PLDP…TPNS. The span at 677–697 shows a compositional bias: acidic residues; the sequence is VDEEEEEDEDEEGEEEEEEEE. Residues 743 to 753 show a composition bias toward low complexity; it reads GSTSSGSSLTT. A 9aaTAD motif is present at residues 874–882; it reads DILMNEFAF.

It localises to the nucleus. In terms of biological role, factor for control of RNA levels of a group of leucine-specific genes. This chain is Regulatory protein LEU3 (LEU3), found in Saccharomyces cerevisiae (strain ATCC 204508 / S288c) (Baker's yeast).